Here is a 487-residue protein sequence, read N- to C-terminus: UPF0276 protein SAV_2218 (487 aa).

Residues 1 to 285 (MVEEGTMERL…LGAIRKTLEK (285 aa)) form a UPF0276 region. Positions 286–487 (AGTRAGASAG…RATRRVLLRR (202 aa)) are unknown. Residues 319–348 (AGPRRGGADAQAAPRAAGTEALSAASTSTP) form a disordered region. The segment covering 326-348 (ADAQAAPRAAGTEALSAASTSTP) has biased composition (low complexity).

It in the N-terminal section; belongs to the UPF0276 family.

The polypeptide is UPF0276 protein SAV_2218 (Streptomyces avermitilis (strain ATCC 31267 / DSM 46492 / JCM 5070 / NBRC 14893 / NCIMB 12804 / NRRL 8165 / MA-4680)).